The primary structure comprises 195 residues: Shikimate kinase (195 aa).

26-31 (GSGKST) contributes to the ATP binding site. Position 30 (serine 30) interacts with Mg(2+). Positions 48, 72, and 94 each coordinate substrate. ATP is bound at residue arginine 132. Position 151 (arginine 151) interacts with substrate.

It belongs to the shikimate kinase family. As to quaternary structure, monomer. Mg(2+) serves as cofactor.

Its subcellular location is the cytoplasm. The enzyme catalyses shikimate + ATP = 3-phosphoshikimate + ADP + H(+). It functions in the pathway metabolic intermediate biosynthesis; chorismate biosynthesis; chorismate from D-erythrose 4-phosphate and phosphoenolpyruvate: step 5/7. Catalyzes the specific phosphorylation of the 3-hydroxyl group of shikimic acid using ATP as a cosubstrate. The chain is Shikimate kinase from Synechococcus sp. (strain RCC307).